Consider the following 76-residue polypeptide: Probable insulin-like peptide alpha-type 1 (76 aa).

Positions 1-24 (MKTYSFFVLFIVFIFFISSSKSHS) are cleaved as a signal peptide. Disulfide bonds link Cys-32–Cys-60, Cys-44–Cys-73, and Cys-48–Cys-74.

It belongs to the insulin family.

The protein localises to the secreted. The polypeptide is Probable insulin-like peptide alpha-type 1 (ins-21) (Caenorhabditis elegans).